Here is a 77-residue protein sequence, read N- to C-terminus: Small ribosomal subunit protein bS16c (77 aa).

Belongs to the bacterial ribosomal protein bS16 family.

The protein localises to the plastid. The protein resides in the chloroplast. The sequence is that of Small ribosomal subunit protein bS16c from Eucalyptus globulus subsp. globulus (Tasmanian blue gum).